The chain runs to 453 residues: Serine incorporator 1 (453 aa).

Gly-2 carries the N-myristoyl glycine lipid modification. Over 2 to 39 (GSVLGLCSMASWIPCLCGSAPCLLCRCCPSGNNSTVTR) the chain is Cytoplasmic. Residues 40–60 (LIYALFLLVGVCVACVMLIPG) traverse the membrane as a helical segment. The Lumenal portion of the chain corresponds to 61–88 (MEEQLNKIPGFCENEKGVVPCNILVGYK). Residues 89 to 109 (AVYRLCFGLAMFYLLLSLLMI) traverse the membrane as a helical segment. Residues 110-123 (KVKSSSDPRAAVHN) lie on the Cytoplasmic side of the membrane. The helical transmembrane segment at 124-144 (GFWFFKFAAAIAIIIGAFFIP) threads the bilayer. Topologically, residues 145–151 (EGTFTTV) are lumenal. A helical membrane pass occupies residues 152–172 (WFYVGMAGAFCFILIQLVLLI). The Cytoplasmic portion of the chain corresponds to 173–197 (DFAHSWNESWVEKMEEGNSRCWYAA). The helical transmembrane segment at 198–218 (LLSATALNYLLSLVAIVLFFV) threads the bilayer. The Lumenal portion of the chain corresponds to 219–231 (YYTHPASCSENKA). The helical transmembrane segment at 232–252 (FISVNMLLCIGASVMSILPKI) threads the bilayer. Residues 253 to 259 (QESQPRS) are Cytoplasmic-facing. A helical membrane pass occupies residues 260-280 (GLLQSSVITVYTMYLTWSAMT). Residues 281-309 (NEPETNCNPSLLSIIGYNTTSTVPKEGQS) are Lumenal-facing. The chain crosses the membrane as a helical span at residues 310 to 330 (VQWWHAQGIIGLILFLLCVFY). Over 331 to 387 (SSIRTSNNSQVNKLTLTSDESTLIEDGGARSDGSLEDGDDVHRAVDNERDGVTYSYS) the chain is Cytoplasmic. A Phosphoserine modification is found at Ser-351. A Phosphothreonine modification is found at Thr-352. A phosphoserine mark is found at Ser-361 and Ser-364. Residues 388–408 (FFHFMLFLASLYIMMTLTNWY) form a helical membrane-spanning segment. Residues 409–426 (RYEPSREMKSQWTAVWVK) are Lumenal-facing. The helical transmembrane segment at 427-447 (ISSSWIGIVLYVWTLVAPLVL) threads the bilayer. The Cytoplasmic segment spans residues 448–453 (TNRDFD).

This sequence belongs to the TDE1 family. As to quaternary structure, interacts with SPTLC1.

The protein resides in the endoplasmic reticulum membrane. In terms of biological role, enhances the incorporation of serine into phosphatidylserine and sphingolipids. The protein is Serine incorporator 1 (SERINC1) of Pongo abelii (Sumatran orangutan).